A 467-amino-acid polypeptide reads, in one-letter code: 3-isopropylmalate dehydratase large subunit (467 aa).

[4Fe-4S] cluster-binding residues include cysteine 347, cysteine 407, and cysteine 410.

The protein belongs to the aconitase/IPM isomerase family. LeuC type 1 subfamily. Heterodimer of LeuC and LeuD. The cofactor is [4Fe-4S] cluster.

The catalysed reaction is (2R,3S)-3-isopropylmalate = (2S)-2-isopropylmalate. Its pathway is amino-acid biosynthesis; L-leucine biosynthesis; L-leucine from 3-methyl-2-oxobutanoate: step 2/4. Functionally, catalyzes the isomerization between 2-isopropylmalate and 3-isopropylmalate, via the formation of 2-isopropylmaleate. This Crocosphaera subtropica (strain ATCC 51142 / BH68) (Cyanothece sp. (strain ATCC 51142)) protein is 3-isopropylmalate dehydratase large subunit.